A 437-amino-acid chain; its full sequence is Sodium/bile acid cotransporter 4 (437 aa).

Topologically, residues 1–103 are extracellular; the sequence is MDSLDNTTLL…PPFWDTPLNH (103 aa). N-linked (GlcNAc...) asparagine glycosylation is found at Asn-6 and Asn-20. Residues 15-79 are disordered; that stretch reads SLLPDNLTLS…SSSLTVGVAG (65 aa). The segment covering 22–41 has biased composition (polar residues); the sequence is TLSPNAGSPSASTLSPLAVT. Low complexity predominate over residues 42–74; the sequence is SSPGPGLSLAPSPSIGFSPEATPTPEPTSSSLT. A helical membrane pass occupies residues 104–124; the sequence is GLNVFVGAALCITMLGLGCTV. Topologically, residues 125-140 are cytoplasmic; sequence DVNHFGAHVRRPVGAL. Residues 141 to 161 traverse the membrane as a helical segment; it reads LAALCQFGFLPLLAFLLALIF. At 162–197 the chain is on the extracellular side; the sequence is KLDEVAAVAVLLCGCCPGGNLSNLMSLLVDGDMNLS. N-linked (GlcNAc...) asparagine glycosylation is found at Asn-181 and Asn-195. A helical membrane pass occupies residues 198–218; that stretch reads IIMTISSTLLALVLMPLCLWI. At 219–233 the chain is on the cytoplasmic side; it reads YSRAWINTPLVQLLP. The helical transmembrane segment at 234–254 threads the bilayer; it reads LGAVTLTLCSTLIPIGLGVFI. The Extracellular portion of the chain corresponds to 255–267; the sequence is RYKYNRVADYIVK. The helical transmembrane segment at 268 to 288 threads the bilayer; sequence VSLWSLLVTLVVLFIMTGTML. Residues 289–291 lie on the Cytoplasmic side of the membrane; that stretch reads GPE. Residues 292–312 traverse the membrane as a helical segment; that stretch reads LLASIPATVYVVAIFMPLAGY. The Extracellular segment spans residues 313-360; that stretch reads ASGYGLATLFHLPPNCKRTVCLETGSQNVQLCTAILKLAFPPRFIGSM. Residues 361–381 form a helical membrane-spanning segment; sequence YMFPLLYALFQSAEAGVFVLI. The Cytoplasmic portion of the chain corresponds to 382–437; the sequence is YKMYGSEILHKREALDEDEDTDISYKKLKEEEMADTSYGTVGTDDLVMMETTQTAL.

It belongs to the bile acid:sodium symporter (BASS) (TC 2.A.28) family. In terms of processing, activated following N-terminal proteolytic cleavage by thrombin and/or proteases. Highest expression in the brain and significantly above background levels in the eye, prostate, and whole embryo tissue preparations.

It is found in the cell membrane. Functionally, transporter for bile acids. This Mus musculus (Mouse) protein is Sodium/bile acid cotransporter 4 (Slc10a4).